A 194-amino-acid chain; its full sequence is Peptidyl-tRNA hydrolase (194 aa).

Residue Tyr16 coordinates tRNA. Residue His21 is the Proton acceptor of the active site. TRNA-binding residues include Phe67, Asn69, and Asn115.

This sequence belongs to the PTH family. Monomer.

It is found in the cytoplasm. The enzyme catalyses an N-acyl-L-alpha-aminoacyl-tRNA + H2O = an N-acyl-L-amino acid + a tRNA + H(+). In terms of biological role, hydrolyzes ribosome-free peptidyl-tRNAs (with 1 or more amino acids incorporated), which drop off the ribosome during protein synthesis, or as a result of ribosome stalling. Catalyzes the release of premature peptidyl moieties from peptidyl-tRNA molecules trapped in stalled 50S ribosomal subunits, and thus maintains levels of free tRNAs and 50S ribosomes. This is Peptidyl-tRNA hydrolase from Colwellia psychrerythraea (strain 34H / ATCC BAA-681) (Vibrio psychroerythus).